We begin with the raw amino-acid sequence, 1210 residues long: DNA-directed RNA polymerase II subunit RPB2 (1210 aa).

Aspartate 826 is a Mg(2+) binding site. Residues cysteine 1152, cysteine 1155, cysteine 1170, and cysteine 1173 each contribute to the Zn(2+) site. Residues 1152–1173 form a C4-type zinc finger; sequence CDICGLIAIASYKKDSYECRSC.

It belongs to the RNA polymerase beta chain family. As to quaternary structure, component of the RNA polymerase II (Pol II) complex consisting of 12 subunits.

Its subcellular location is the nucleus. The catalysed reaction is RNA(n) + a ribonucleoside 5'-triphosphate = RNA(n+1) + diphosphate. In terms of biological role, DNA-dependent RNA polymerase catalyzes the transcription of DNA into RNA using the four ribonucleoside triphosphates as substrates. Second largest component of RNA polymerase II which synthesizes mRNA precursors and many functional non-coding RNAs. Proposed to contribute to the polymerase catalytic activity and forms the polymerase active center together with the largest subunit. Pol II is the central component of the basal RNA polymerase II transcription machinery. It is composed of mobile elements that move relative to each other. RPB2 is part of the core element with the central large cleft, the clamp element that moves to open and close the cleft and the jaws that are thought to grab the incoming DNA template. This Schizosaccharomyces pombe (strain 972 / ATCC 24843) (Fission yeast) protein is DNA-directed RNA polymerase II subunit RPB2 (rpb2).